Here is a 46-residue protein sequence, read N- to C-terminus: Protein PsbN (46 aa).

A helical transmembrane segment spans residues 7-27 (GLSIAITFAVILLALTGFSIY).

Belongs to the PsbN family.

The protein resides in the cellular thylakoid membrane. Functionally, may play a role in photosystem I and II biogenesis. The chain is Protein PsbN from Synechococcus elongatus (strain ATCC 33912 / PCC 7942 / FACHB-805) (Anacystis nidulans R2).